Here is a 407-residue protein sequence, read N- to C-terminus: Phosphopentomutase (407 aa).

Positions 10, 306, 311, 347, 348, and 359 each coordinate Mn(2+).

It belongs to the phosphopentomutase family. Mn(2+) is required as a cofactor.

It is found in the cytoplasm. The enzyme catalyses 2-deoxy-alpha-D-ribose 1-phosphate = 2-deoxy-D-ribose 5-phosphate. It carries out the reaction alpha-D-ribose 1-phosphate = D-ribose 5-phosphate. The protein operates within carbohydrate degradation; 2-deoxy-D-ribose 1-phosphate degradation; D-glyceraldehyde 3-phosphate and acetaldehyde from 2-deoxy-alpha-D-ribose 1-phosphate: step 1/2. In terms of biological role, isomerase that catalyzes the conversion of deoxy-ribose 1-phosphate (dRib-1-P) and ribose 1-phosphate (Rib-1-P) to deoxy-ribose 5-phosphate (dRib-5-P) and ribose 5-phosphate (Rib-5-P), respectively. This Buchnera aphidicola subsp. Acyrthosiphon pisum (strain Tuc7) protein is Phosphopentomutase.